A 132-amino-acid chain; its full sequence is Large ribosomal subunit protein eL8 (132 aa).

Position 8 is an N6-acetyllysine; alternate (Lys8). Lys8 participates in a covalent cross-link: Glycyl lysine isopeptide (Lys-Gly) (interchain with G-Cter in SUMO2); alternate. Lys36 participates in a covalent cross-link: Glycyl lysine isopeptide (Lys-Gly) (interchain with G-Cter in SUMO2). N6-acetyllysine is present on Lys128.

This sequence belongs to the eukaryotic ribosomal protein eL8 family. As to quaternary structure, component of the large ribosomal subunit. Interacts with CRY1. Interacts with DICER1, AGO2, TARBP2, MOV10 and EIF6; they form a large RNA-induced silencing complex (RISC).

It localises to the cytoplasm. In terms of biological role, component of the large ribosomal subunit. The ribosome is a large ribonucleoprotein complex responsible for the synthesis of proteins in the cell. The protein is Large ribosomal subunit protein eL8 (RPL7A) of Sus scrofa (Pig).